Reading from the N-terminus, the 159-residue chain is SsrA-binding protein (159 aa).

This sequence belongs to the SmpB family.

Its subcellular location is the cytoplasm. Required for rescue of stalled ribosomes mediated by trans-translation. Binds to transfer-messenger RNA (tmRNA), required for stable association of tmRNA with ribosomes. tmRNA and SmpB together mimic tRNA shape, replacing the anticodon stem-loop with SmpB. tmRNA is encoded by the ssrA gene; the 2 termini fold to resemble tRNA(Ala) and it encodes a 'tag peptide', a short internal open reading frame. During trans-translation Ala-aminoacylated tmRNA acts like a tRNA, entering the A-site of stalled ribosomes, displacing the stalled mRNA. The ribosome then switches to translate the ORF on the tmRNA; the nascent peptide is terminated with the 'tag peptide' encoded by the tmRNA and targeted for degradation. The ribosome is freed to recommence translation, which seems to be the essential function of trans-translation. The sequence is that of SsrA-binding protein from Dichelobacter nodosus (strain VCS1703A).